The sequence spans 212 residues: Cyclin-dependent kinase 2-interacting protein (212 aa).

N-acetylmethionine is present on Met1. Ser69 and Ser73 each carry phosphoserine. Residues Ser73–Val107 adopt a coiled-coil conformation. Ser202 is a Na(+) binding site.

The protein belongs to the CINP family. In terms of assembly, homodimer. Part of the 55LCC heterohexameric ATPase complex composed at least of AIRIM, AFG2A, AFG2B and CINP. Interacts with AIRIM. Interacts with CDK2 and CDC7. Interacts with the components of the replication complex, MCM2, MCM3, MCM4, MCM5, MCM6, MCM7 and with ORC2-containing complexes. Interacts with ATRIP. Interacts with CEP152. Associates with pre-60S ribosomal particles. In terms of processing, phosphorylated by CDC7 but not by CDK2.

It localises to the nucleus. Functionally, component of the DNA replication complex, which interacts with two kinases, CDK2 and CDC7, thereby providing a functional and physical link between CDK2 and CDC7 during firing of the origins of replication. Regulates ATR-mediated checkpoint signaling in response to DNA damage. Part of the 55LCC heterohexameric ATPase complex which is chromatin-associated and promotes replisome proteostasis to maintain replication fork progression and genome stability. Required for replication fork progression, sister chromatid cohesion, and chromosome stability. The ATPase activity is specifically enhanced by replication fork DNA and is coupled to cysteine protease-dependent cleavage of replisome substrates in response to replication fork damage. Uses ATPase activity to process replisome substrates in S-phase, facilitating their proteolytic turnover from chromatin to ensure DNA replication and mitotic fidelity. As part of 55LCC complex, also involved in the cytoplasmic maturation steps of pre-60S ribosomal particles by promoting the release of shuttling protein RSL24D1/RLP24 from the pre-ribosomal particles. This Homo sapiens (Human) protein is Cyclin-dependent kinase 2-interacting protein.